Consider the following 402-residue polypeptide: Omega-3 fatty acid desaturase fat-1 (402 aa).

4 helical membrane-spanning segments follow: residues Leu79 to Phe99, Leu101 to Val121, Cys235 to Ser255, and Phe260 to Leu280.

The protein belongs to the fatty acid desaturase type 1 family.

The protein resides in the membrane. It carries out the reaction (9Z,12Z)-octadecadienoyl-CoA + 2 Fe(II)-[cytochrome b5] + O2 + 2 H(+) = (9Z,12Z,15Z)-octadecatrienoyl-CoA + 2 Fe(III)-[cytochrome b5] + 2 H2O. The catalysed reaction is (8Z,11Z,14Z)-eicosatrienoyl-CoA + 2 Fe(II)-[cytochrome b5] + O2 + 2 H(+) = (8Z,11Z,14Z,17Z)-eicosatetraenoyl-CoA + 2 Fe(III)-[cytochrome b5] + 2 H2O. The enzyme catalyses (5Z,8Z,11Z,14Z)-eicosatetraenoyl-CoA + 2 Fe(II)-[cytochrome b5] + O2 + 2 H(+) = (5Z,8Z,11Z,14Z,17Z)-eicosapentaenoyl-CoA + 2 Fe(III)-[cytochrome b5] + 2 H2O. It catalyses the reaction (7Z,10Z,13Z,16Z)-docosatetraenoyl-CoA + 2 Fe(II)-[cytochrome b5] + O2 + 2 H(+) = (7Z,10Z,13Z,16Z,19Z)-docosapentaenoyl-CoA + 2 Fe(III)-[cytochrome b5] + 2 H2O. It carries out the reaction (6Z,9Z,12Z)-octadecatrienoyl-CoA + 2 Fe(II)-[cytochrome b5] + O2 + 2 H(+) = (6Z,9Z,12Z,15Z)-octadecatetraenoyl-CoA + 2 Fe(III)-[cytochrome b5] + 2 H2O. It functions in the pathway lipid metabolism; polyunsaturated fatty acid biosynthesis. In terms of biological role, omega-3 fatty acid desaturase that recognizes a range of 18- and 20-carbon omega-6 substrates. Introduces a double bond in the fatty acid chain three carbons away from terminal methyl group to biosynthesize n-3 (omega-3) polyunsaturated fatty acids (PUFAs) endogenously (PUFAs are essential for membrane structure and many cellular and physiological processes). Acts on a number of substrates like linoleoyl-CoA ((9Z,12Z)-octadecadienoyl-CoA, 18:2n-6), dihomo-gamma-linolenoyl-CoA ((8Z,11Z,14Z)-eicosatrienoyl-CoA, 20:3n-6), and arachidonoyl-CoA ((5Z,8Z,11Z,14Z)-eicosatetraenoyl-CoA, 20:4n-6), to generate alpha-linolenoyl-CoA ((9Z,12Z,15Z)-octadecatrienoyl-CoA, 18:3n-3), (8Z,11Z,14Z,17Z)-eicosatetraenoyl-CoA (20:4n-3) and (5Z,8Z,11Z,14Z,17Z)-eicosapentaenoyl-CoA (20:5n-3) respectively. Unlike plants, Caenorhabditis elegans desaturases seem to use fatty acyl-CoAs as substrates. This chain is Omega-3 fatty acid desaturase fat-1 (fat-1), found in Caenorhabditis elegans.